The following is a 701-amino-acid chain: MAQDVLTDLNKVRNIGIMAHIDAGKTTTTERILYYTGVNYKIGETHDGASTTDWMEQEQERGITITSAAVTCFWNGNQINIIDTPGHVDFTVEVERSLRVLDGAVAVFDGKEGVEPQSEQVWRQADKYDVPRICFVNKMDKLGADFYFTVQTIKDRLGAKPLVIQLPIGAENDFEGIIDLVEMNAKVWRGETKLGESYETVEIPADLADKAAEYRNELLETVAESDEALLEKYLGGEELSIDEIKAGIRKLTVASELYPVLCGSAFKNKGVQPMLDAVIDYLPSPLDVESVKGHVPGHEDQEIERKPSTDEPFSALAFKIAVHPFFGKLTYVRVYSGKIESGAQVVNATKGKKERLGKLFQMHANKENPVETAAAGHIYAVIGLKDTTTGDTLCDPNSQIVLESMTFPDPVIEVAIEPKTKTDQEKLGTAIQKLAEEDPTFKVKLDQETGQTVIGGMGELHLDILVDRMRREFKVEANVGKPQVAYRETIRKKVENVEFTHKKQTGGSGQFAKVIVTVEPLVDAEDGATYEFENKVTGGRVPREYIPSVDAGAQDAMQYGILAGYPLVNIKVTLLDGAYHDVDSSEMAFKIAGSQALKKAAQAAQPVILEPLMAVEVITPEDYMGDVIGDLNSRRGQIQAMEERSGARVVKAQVPLSEMFGYVGDLRSKTQGRANYSMVFDSYAEVPANVSKEIIAKATGE.

The 277-residue stretch at 10-286 folds into the tr-type G domain; the sequence is NKVRNIGIMA…AVIDYLPSPL (277 aa). GTP is bound by residues 19–26, 83–87, and 137–140; these read AHIDAGKT, DTPGH, and NKMD.

It belongs to the TRAFAC class translation factor GTPase superfamily. Classic translation factor GTPase family. EF-G/EF-2 subfamily.

It localises to the cytoplasm. Its function is as follows. Catalyzes the GTP-dependent ribosomal translocation step during translation elongation. During this step, the ribosome changes from the pre-translocational (PRE) to the post-translocational (POST) state as the newly formed A-site-bound peptidyl-tRNA and P-site-bound deacylated tRNA move to the P and E sites, respectively. Catalyzes the coordinated movement of the two tRNA molecules, the mRNA and conformational changes in the ribosome. The sequence is that of Elongation factor G from Mycobacteroides abscessus (strain ATCC 19977 / DSM 44196 / CCUG 20993 / CIP 104536 / JCM 13569 / NCTC 13031 / TMC 1543 / L948) (Mycobacterium abscessus).